Consider the following 402-residue polypeptide: Acyl-[acyl-carrier-protein] desaturase 3, chloroplastic (402 aa).

Disordered stretches follow at residues 1–25 (MSLT…GGAS) and 38–66 (VGGI…THTL). The N-terminal 32 residues, 1 to 32 (MSLTGCLPPRPPCSMRRRTSGGGASVSPVVVM), are a transit peptide targeting the chloroplast. Fe cation contacts are provided by E139, E178, H181, E231, E264, and H267.

This sequence belongs to the fatty acid desaturase type 2 family. Homodimer. Fe(2+) serves as cofactor.

The protein resides in the plastid. It is found in the chloroplast. It participates in lipid metabolism; fatty acid metabolism. Functionally, introduces a cis double bond in the acyl chain of an acyl-[acyl-carrier protein]. This is Acyl-[acyl-carrier-protein] desaturase 3, chloroplastic from Oryza sativa subsp. indica (Rice).